A 492-amino-acid chain; its full sequence is Stage IV sporulation protein A (492 aa).

A Walker A motif; involved in ATP-binding motif is present at residues 24–31; that stretch reads GAVRTGKS. Residue 24 to 31 coordinates ATP; that stretch reads GAVRTGKS.

It is found in the cytoplasm. It catalyses the reaction ATP + H2O = ADP + phosphate + H(+). ATPase. Has a role at an early stage in the morphogenesis of the spore coat outer layers. Directs the assembly of the coat and exosporium to an area around the forespore. The sequence is that of Stage IV sporulation protein A from Bacillus anthracis.